The following is a 114-amino-acid chain: Probable acid stress chaperone HdeA (114 aa).

Positions 1 to 26 are cleaved as a signal peptide; the sequence is MIKTLFNKNTALAAVAILALSGSAMA. Cys-46 and Cys-94 are disulfide-bonded.

Belongs to the HdeA family.

It localises to the periplasm. Functionally, required for optimal acid stress protection. Exhibits a chaperone-like activity only at low pH by suppressing non-specifically the aggregation of denaturated periplasmic proteins. The polypeptide is Probable acid stress chaperone HdeA (Brucella ovis (strain ATCC 25840 / 63/290 / NCTC 10512)).